The primary structure comprises 279 residues: MKLLEKMIYVEFLMIIMVIWVVPMSYGHGAMIGNAVEAPDVAEAPGINDPSKALDTNWYDARATFYGDIHGGDTQQGACGYGNLFRQGYGLATAALSTALFNDGYTCGACYEIMCTRDPQWCLPGSVKITATNFCPANYSKTTDLWCNPPQKHFDLSLAMFLKIAKYKAGVVPVRYRRIPCSKTGGVKFETKGNPYFLMVLIYNVGGAGDIKYVQVKGNKTGWITMKKNWGQNWTTITVLTGQGLSFRVTTSDGITKDFWNVMPKNWGFGQTFDGRINF.

The N-terminal stretch at 1–27 is a signal peptide; the sequence is MKLLEKMIYVEFLMIIMVIWVVPMSYG. Residues 76–186 form the Expansin-like EG45 domain; sequence QGACGYGNLF…RRIPCSKTGG (111 aa). The Expansin-like CBD domain maps to 196–275; that stretch reads YFLMVLIYNV…NWGFGQTFDG (80 aa).

It belongs to the expansin family. Expansin A subfamily.

It localises to the secreted. The protein resides in the cell wall. It is found in the membrane. In terms of biological role, causes loosening and extension of plant cell walls by disrupting non-covalent bonding between cellulose microfibrils and matrix glucans. No enzymatic activity has been found. The polypeptide is Expansin-A22 (EXPA22) (Arabidopsis thaliana (Mouse-ear cress)).